The following is a 429-amino-acid chain: Ribosomal protein uS12 methylthiotransferase RimO (429 aa).

The region spanning 2 to 118 (HNIFLLSLGC…VLRAIGAEYR (117 aa)) is the MTTase N-terminal domain. 6 residues coordinate [4Fe-4S] cluster: cysteine 11, cysteine 47, cysteine 81, cysteine 142, cysteine 146, and cysteine 149. The 230-residue stretch at 128–357 (LTPPHYAFLK…MELQETISQE (230 aa)) folds into the Radical SAM core domain. The region spanning 360-427 (REFEGNEIVV…PYDLEGEVIG (68 aa)) is the TRAM domain.

Belongs to the methylthiotransferase family. RimO subfamily. Requires [4Fe-4S] cluster as cofactor.

The protein localises to the cytoplasm. The catalysed reaction is L-aspartate(89)-[ribosomal protein uS12]-hydrogen + (sulfur carrier)-SH + AH2 + 2 S-adenosyl-L-methionine = 3-methylsulfanyl-L-aspartate(89)-[ribosomal protein uS12]-hydrogen + (sulfur carrier)-H + 5'-deoxyadenosine + L-methionine + A + S-adenosyl-L-homocysteine + 2 H(+). Its function is as follows. Catalyzes the methylthiolation of an aspartic acid residue of ribosomal protein uS12. The sequence is that of Ribosomal protein uS12 methylthiotransferase RimO from Chlorobium limicola (strain DSM 245 / NBRC 103803 / 6330).